Consider the following 1208-residue polypeptide: DNA-directed RNA polymerase subunit beta (1208 aa).

The protein belongs to the RNA polymerase beta chain family. The RNAP catalytic core consists of 2 alpha, 1 beta, 1 beta' and 1 omega subunit. When a sigma factor is associated with the core the holoenzyme is formed, which can initiate transcription.

It carries out the reaction RNA(n) + a ribonucleoside 5'-triphosphate = RNA(n+1) + diphosphate. Functionally, DNA-dependent RNA polymerase catalyzes the transcription of DNA into RNA using the four ribonucleoside triphosphates as substrates. This chain is DNA-directed RNA polymerase subunit beta, found in Enterococcus faecium (Streptococcus faecium).